The sequence spans 101 residues: NAD(P)H-quinone oxidoreductase subunit 4L, chloroplastic (101 aa).

The next 3 helical transmembrane spans lie at 2–22 (ILEH…YGLI), 32–52 (MCLE…SDFF), and 61–81 (IFCI…LAIV).

This sequence belongs to the complex I subunit 4L family. NDH is composed of at least 16 different subunits, 5 of which are encoded in the nucleus.

It localises to the plastid. It is found in the chloroplast thylakoid membrane. The catalysed reaction is a plastoquinone + NADH + (n+1) H(+)(in) = a plastoquinol + NAD(+) + n H(+)(out). It catalyses the reaction a plastoquinone + NADPH + (n+1) H(+)(in) = a plastoquinol + NADP(+) + n H(+)(out). In terms of biological role, NDH shuttles electrons from NAD(P)H:plastoquinone, via FMN and iron-sulfur (Fe-S) centers, to quinones in the photosynthetic chain and possibly in a chloroplast respiratory chain. The immediate electron acceptor for the enzyme in this species is believed to be plastoquinone. Couples the redox reaction to proton translocation, and thus conserves the redox energy in a proton gradient. The sequence is that of NAD(P)H-quinone oxidoreductase subunit 4L, chloroplastic from Draba nemorosa (Woodland whitlowgrass).